Here is a 363-residue protein sequence, read N- to C-terminus: uncharacterized protein (363 aa).

4 consecutive transmembrane segments (helical) span residues 34 to 54 (YVYD…IILW), 60 to 80 (LALF…TLLV), 91 to 111 (EIAD…TAAG), and 112 to 132 (LMFS…PLFL). Over residues 232-245 (SSTTTHSTDSEQIL) the composition is skewed to polar residues. Positions 232-363 (SSTTTHSTDS…SSQKKKPSRK (132 aa)) are disordered. Low complexity-rich tracts occupy residues 246–268 (TSVS…TPPN) and 275–285 (DSNSSDSSSSS). Positions 322 to 342 (SRSERNAQHHRNKDQEQRQDS) are enriched in basic and acidic residues.

This sequence belongs to the chlamydial CPn_0443/CT_005/TC_0273 family.

It is found in the cell membrane. This is an uncharacterized protein from Chlamydia trachomatis serovar D (strain ATCC VR-885 / DSM 19411 / UW-3/Cx).